The chain runs to 446 residues: Tol-Pal system protein TolB (446 aa).

Residues 1–43 form the signal peptide; the sequence is MRKLWAPNWLSRRQNANPTRDQSRHALMAWLAAALMSAGAAHA.

The protein belongs to the TolB family. In terms of assembly, the Tol-Pal system is composed of five core proteins: the inner membrane proteins TolA, TolQ and TolR, the periplasmic protein TolB and the outer membrane protein Pal. They form a network linking the inner and outer membranes and the peptidoglycan layer.

The protein resides in the periplasm. Functionally, part of the Tol-Pal system, which plays a role in outer membrane invagination during cell division and is important for maintaining outer membrane integrity. The protein is Tol-Pal system protein TolB of Cupriavidus metallidurans (strain ATCC 43123 / DSM 2839 / NBRC 102507 / CH34) (Ralstonia metallidurans).